We begin with the raw amino-acid sequence, 61 residues long: Large ribosomal subunit protein uL30 (61 aa).

This sequence belongs to the universal ribosomal protein uL30 family. Part of the 50S ribosomal subunit.

The polypeptide is Large ribosomal subunit protein uL30 (Teredinibacter turnerae (strain ATCC 39867 / T7901)).